The primary structure comprises 65 residues: MGSIRQTYIKSTTDALLRQYPNEFGSDFTANKAKVEQLASVQTKEVRNRIAGYVTRKMASKGRKK.

It belongs to the eukaryotic ribosomal protein eS17 family.

In Methanocella arvoryzae (strain DSM 22066 / NBRC 105507 / MRE50), this protein is Small ribosomal subunit protein eS17.